A 1381-amino-acid polypeptide reads, in one-letter code: Major capsid protein (1381 aa).

This sequence belongs to the herpesviridae major capsid protein family. In terms of assembly, homomultimer. Makes the hexons and eleven out of twelve pentons. Interacts with triplex proteins 1/TRX1 and 2/TRX2; adjacent capsomers are linked together in groups of three by triplexes, heterotrimeric complexes composed of one molecule of TRX1 and two molecules of TRX2. Interacts with scaffold protein; this interaction allows efficient MCP transport to the host nucleus. Interacts with capsid vertex component 2/CVC2. Interacts with the small capsomere-interacting protein/SCP.

The protein localises to the virion. It localises to the host nucleus. Its function is as follows. Self-assembles to form an icosahedral capsid with a T=16 symmetry, about 200 nm in diameter, and consisting of 150 hexons and 12 pentons (total of 162 capsomers). Hexons form the edges and faces of the capsid and are each composed of six MCP molecules. In contrast, one penton is found at each of the 12 vertices. Eleven of the pentons are MCP pentamers, while the last vertex is occupied by the portal complex. The capsid is surrounded by a layer of proteinaceous material designated the tegument which, in turn, is enclosed in an envelope of host cell-derived lipids containing virus-encoded glycoproteins. The protein is Major capsid protein of Epstein-Barr virus (strain AG876) (HHV-4).